We begin with the raw amino-acid sequence, 496 residues long: MTPAQSYPHLDVLFITPEIHPLNKTGGLGEVSAALPTALSELGMDVRILIPGYPQILNGLKNKQKIAEFAAQSSFPAATLLSARLPFGASGNVPLFIIDCPELYRRDGGPYTDPQGHNWPDNAIRFGLLSKIGAILASDASPLDWHPDVVHCNDWQSGLVPAYLHFHKGTKAASLMVIHNLAFQGVFSPETVSQLGLPQTSFHTEGVEYYGGMSFLKAGLYYCDHIVTVSPTYAREIQVAPLGFGMEGLLSLRHEHITGIVNGISDEWNPVNDPHLEQNYSMDDLSGKVINKAALQQQLGLTVDPDVPLFGAVSRLTYQKGYDLLLRIITQLIDIPGQLVILGSGETMLEQELMRMARNHPGKMAVRIGFDEKLAHLIEAGADCFLMPSRFEPCGLNQMYSQCYGTPPLVHGTGGLLDTVVDCTAESLADGTATGFVFHELTPEAFLGALERAVAAYRDKPVWDRLMRNGMVQDFSWRASATDYRKIYLSLLNQKR.

K24 contributes to the ADP-alpha-D-glucose binding site.

Belongs to the glycosyltransferase 1 family. Bacterial/plant glycogen synthase subfamily.

The enzyme catalyses [(1-&gt;4)-alpha-D-glucosyl](n) + ADP-alpha-D-glucose = [(1-&gt;4)-alpha-D-glucosyl](n+1) + ADP + H(+). The protein operates within glycan biosynthesis; glycogen biosynthesis. Its function is as follows. Synthesizes alpha-1,4-glucan chains using ADP-glucose. This is Glycogen synthase from Nitrosospira multiformis (strain ATCC 25196 / NCIMB 11849 / C 71).